The following is a 455-amino-acid chain: ATP-dependent protease ATPase subunit HslU (455 aa).

ATP contacts are provided by residues isoleucine 19 and 61–66 (GVGKTE). Residues 144–163 (ESKVGFANEPAEDAASKKEK) form a disordered region. Residues aspartate 268, glutamate 333, and arginine 405 each coordinate ATP.

The protein belongs to the ClpX chaperone family. HslU subfamily. A double ring-shaped homohexamer of HslV is capped on each side by a ring-shaped HslU homohexamer. The assembly of the HslU/HslV complex is dependent on binding of ATP.

The protein localises to the cytoplasm. Functionally, ATPase subunit of a proteasome-like degradation complex; this subunit has chaperone activity. The binding of ATP and its subsequent hydrolysis by HslU are essential for unfolding of protein substrates subsequently hydrolyzed by HslV. HslU recognizes the N-terminal part of its protein substrates and unfolds these before they are guided to HslV for hydrolysis. The polypeptide is ATP-dependent protease ATPase subunit HslU (Francisella tularensis subsp. holarctica (strain FTNF002-00 / FTA)).